The chain runs to 270 residues: Oxidoreductase claK (270 aa).

The protein belongs to the avfA family.

Its pathway is pigment biosynthesis. In terms of biological role, oxidoreductase; part of the gene cluster that mediates the biosynthesis of the bianthraquinone cladofulvin, a conidial pigment not required for virulence but that plays a role in fitness and resistance to environmental stresses including UV light and low-temperature stress. The pathway begins with the synthesis of atrochrysone thioester by the polyketide synthase (PKS) claG. The atrochrysone carboxyl ACP thioesterase claF then breaks the thioester bond and releases the atrochrysone carboxylic acid from claG. This compound is decarboxylated by claH to yield emodin, which is further converted to chrysophanol hydroquinone by the reductase claC and the dehydratase claB. The cytochrome monooxygenase P450 claM then catalyzes the dimerization of nataloe-emodin to cladofulvin. In Passalora fulva (Tomato leaf mold), this protein is Oxidoreductase claK.